A 144-amino-acid polypeptide reads, in one-letter code: D-aminoacyl-tRNA deacylase (144 aa).

The Gly-cisPro motif, important for rejection of L-amino acids signature appears at Gly-136–Pro-137.

It belongs to the DTD family. As to quaternary structure, homodimer.

It localises to the cytoplasm. It carries out the reaction glycyl-tRNA(Ala) + H2O = tRNA(Ala) + glycine + H(+). The catalysed reaction is a D-aminoacyl-tRNA + H2O = a tRNA + a D-alpha-amino acid + H(+). In terms of biological role, an aminoacyl-tRNA editing enzyme that deacylates mischarged D-aminoacyl-tRNAs. Also deacylates mischarged glycyl-tRNA(Ala), protecting cells against glycine mischarging by AlaRS. Acts via tRNA-based rather than protein-based catalysis; rejects L-amino acids rather than detecting D-amino acids in the active site. By recycling D-aminoacyl-tRNA to D-amino acids and free tRNA molecules, this enzyme counteracts the toxicity associated with the formation of D-aminoacyl-tRNA entities in vivo and helps enforce protein L-homochirality. This is D-aminoacyl-tRNA deacylase from Haemophilus influenzae (strain PittGG).